The following is a 491-amino-acid chain: MTVHFPFQNSYSALPDSFFARVAPTPVAAPRLIKLNRPLAVQLGLDPNMLETPEGAEILAGKTVPDGADPIAMAYAGHQFGQFVPQLGDGRAILLGEVIDRDGVRRDIQLKGSGPTPFSRRGDGRAALGPVLREYIVSEAMYALGIPTTRSLAAVVTGEHVIRETALPGAVLTRVAASHIRVGTFQFFAVRRDTDAIRRLADHVIARHYPELLGTERPYHALLAGVVARQAELVARWLLVGFIHGVMNTDNSSISGETIDYGPCAFMDAYNPAQVFSSIDEMGRYAYANQPRIALWNLTRLAECLLPLFGEEQEKAVEQAQDILGAFPETFSKAYQAGLRKKVGLFTERDGDEALIQDLLDAMAKNQADFTLTFRRLGDAAGDPAADDARAEFMDPAAFDEWARRWRERLAAEPQSAAERQTAMNAVNPLFIPRNHRVEAVIQAAVNDDNYALFEELVKVLAKPYEDQPDYAAYADPPLPDQRVLQTFCGT.

ATP-binding residues include glycine 88, glycine 90, arginine 91, lysine 111, aspartate 123, glycine 124, arginine 174, and arginine 181. Residue aspartate 250 is the Proton acceptor of the active site. Positions 251 and 260 each coordinate Mg(2+). Aspartate 260 is a binding site for ATP.

This sequence belongs to the SELO family. Requires Mg(2+) as cofactor. Mn(2+) is required as a cofactor.

The enzyme catalyses L-seryl-[protein] + ATP = 3-O-(5'-adenylyl)-L-seryl-[protein] + diphosphate. It catalyses the reaction L-threonyl-[protein] + ATP = 3-O-(5'-adenylyl)-L-threonyl-[protein] + diphosphate. The catalysed reaction is L-tyrosyl-[protein] + ATP = O-(5'-adenylyl)-L-tyrosyl-[protein] + diphosphate. It carries out the reaction L-histidyl-[protein] + UTP = N(tele)-(5'-uridylyl)-L-histidyl-[protein] + diphosphate. The enzyme catalyses L-seryl-[protein] + UTP = O-(5'-uridylyl)-L-seryl-[protein] + diphosphate. It catalyses the reaction L-tyrosyl-[protein] + UTP = O-(5'-uridylyl)-L-tyrosyl-[protein] + diphosphate. In terms of biological role, nucleotidyltransferase involved in the post-translational modification of proteins. It can catalyze the addition of adenosine monophosphate (AMP) or uridine monophosphate (UMP) to a protein, resulting in modifications known as AMPylation and UMPylation. The chain is Protein nucleotidyltransferase YdiU from Bradyrhizobium diazoefficiens (strain JCM 10833 / BCRC 13528 / IAM 13628 / NBRC 14792 / USDA 110).